The chain runs to 432 residues: Enolase (432 aa).

Glutamine 167 lines the (2R)-2-phosphoglycerate pocket. Glutamate 209 (proton donor) is an active-site residue. Positions 246, 290, and 317 each coordinate Mg(2+). (2R)-2-phosphoglycerate is bound by residues lysine 342, arginine 371, serine 372, and lysine 393. Lysine 342 acts as the Proton acceptor in catalysis.

This sequence belongs to the enolase family. Component of the RNA degradosome, a multiprotein complex involved in RNA processing and mRNA degradation. It depends on Mg(2+) as a cofactor.

The protein resides in the cytoplasm. It localises to the secreted. The protein localises to the cell surface. The catalysed reaction is (2R)-2-phosphoglycerate = phosphoenolpyruvate + H2O. It participates in carbohydrate degradation; glycolysis; pyruvate from D-glyceraldehyde 3-phosphate: step 4/5. Its function is as follows. Catalyzes the reversible conversion of 2-phosphoglycerate (2-PG) into phosphoenolpyruvate (PEP). It is essential for the degradation of carbohydrates via glycolysis. This Escherichia coli O139:H28 (strain E24377A / ETEC) protein is Enolase.